Here is a 156-residue protein sequence, read N- to C-terminus: MPRRREVPKRKVLADPKYGSELLTKFVNMVMRDGKRSVAEKIMYGALERIESKGHETPMEVLETALENVQPKVEVKSRRVGGATYQVPVEVRPERRTTLAMRWLLDAARKRGETTMALRLAGEMLDASESRGAAVKKREDTHRMAEANKAFSHYRW.

Belongs to the universal ribosomal protein uS7 family. As to quaternary structure, part of the 30S ribosomal subunit. Contacts proteins S9 and S11.

One of the primary rRNA binding proteins, it binds directly to 16S rRNA where it nucleates assembly of the head domain of the 30S subunit. Is located at the subunit interface close to the decoding center, probably blocks exit of the E-site tRNA. In Alkalilimnicola ehrlichii (strain ATCC BAA-1101 / DSM 17681 / MLHE-1), this protein is Small ribosomal subunit protein uS7.